We begin with the raw amino-acid sequence, 538 residues long: Chaperonin GroEL (538 aa).

Residues 30-33 (TLGP), 87-91 (DGTTT), Gly-415, 479-481 (DAA), and Asp-495 each bind ATP.

The protein belongs to the chaperonin (HSP60) family. As to quaternary structure, forms a cylinder of 14 subunits composed of two heptameric rings stacked back-to-back. Interacts with the co-chaperonin GroES.

It is found in the cytoplasm. It catalyses the reaction ATP + H2O + a folded polypeptide = ADP + phosphate + an unfolded polypeptide.. Together with its co-chaperonin GroES, plays an essential role in assisting protein folding. The GroEL-GroES system forms a nano-cage that allows encapsulation of the non-native substrate proteins and provides a physical environment optimized to promote and accelerate protein folding. The sequence is that of Chaperonin GroEL from Dictyoglomus thermophilum (strain ATCC 35947 / DSM 3960 / H-6-12).